Consider the following 60-residue polypeptide: Small ribosomal subunit protein bS21 (60 aa).

The segment at Lys38 to Tyr60 is disordered.

Belongs to the bacterial ribosomal protein bS21 family.

In Mycoplasmoides gallisepticum (strain R(low / passage 15 / clone 2)) (Mycoplasma gallisepticum), this protein is Small ribosomal subunit protein bS21.